A 253-amino-acid polypeptide reads, in one-letter code: Flap endonuclease Xni (253 aa).

Aspartate 104 is a binding site for Mg(2+). One can recognise a 5'-3' exonuclease domain in the interval 160 to 250; that stretch reads VAPQQLTDFW…HGNLQQLRLN (91 aa). Positions 171, 172, 180, 182, and 185 each coordinate K(+). Residues 184-189 are interaction with DNA; the sequence is GIGAKT.

It belongs to the Xni family. The cofactor is Mg(2+). K(+) serves as cofactor.

In terms of biological role, has flap endonuclease activity. During DNA replication, flap endonucleases cleave the 5'-overhanging flap structure that is generated by displacement synthesis when DNA polymerase encounters the 5'-end of a downstream Okazaki fragment. The sequence is that of Flap endonuclease Xni from Edwardsiella ictaluri (strain 93-146).